The sequence spans 214 residues: Thiopurine S-methyltransferase (214 aa).

The S-adenosyl-L-methionine site is built by W10, L44, E65, and R122.

Belongs to the class I-like SAM-binding methyltransferase superfamily. TPMT family.

The protein localises to the cytoplasm. The catalysed reaction is S-adenosyl-L-methionine + a thiopurine = S-adenosyl-L-homocysteine + a thiopurine S-methylether.. The protein is Thiopurine S-methyltransferase of Teredinibacter turnerae (strain ATCC 39867 / T7901).